A 171-amino-acid polypeptide reads, in one-letter code: ATP synthase subunit b (171 aa).

The helical transmembrane segment at 31–51 threads the bilayer; the sequence is FFVVLAIFLVVLAVIGTFVVP.

It belongs to the ATPase B chain family. In terms of assembly, F-type ATPases have 2 components, F(1) - the catalytic core - and F(0) - the membrane proton channel. F(1) has five subunits: alpha(3), beta(3), gamma(1), delta(1), epsilon(1). F(0) has three main subunits: a(1), b(2) and c(10-14). The alpha and beta chains form an alternating ring which encloses part of the gamma chain. F(1) is attached to F(0) by a central stalk formed by the gamma and epsilon chains, while a peripheral stalk is formed by the delta and b chains.

Its subcellular location is the cell membrane. Its function is as follows. F(1)F(0) ATP synthase produces ATP from ADP in the presence of a proton or sodium gradient. F-type ATPases consist of two structural domains, F(1) containing the extramembraneous catalytic core and F(0) containing the membrane proton channel, linked together by a central stalk and a peripheral stalk. During catalysis, ATP synthesis in the catalytic domain of F(1) is coupled via a rotary mechanism of the central stalk subunits to proton translocation. Functionally, component of the F(0) channel, it forms part of the peripheral stalk, linking F(1) to F(0). In Mycobacterium bovis (strain ATCC BAA-935 / AF2122/97), this protein is ATP synthase subunit b.